The following is a 369-amino-acid chain: UDP-N-acetylglucosamine--N-acetylmuramyl-(pentapeptide) pyrophosphoryl-undecaprenol N-acetylglucosamine transferase (369 aa).

Residues 15–17 (TGG), N126, R169, S197, and Q299 each bind UDP-N-acetyl-alpha-D-glucosamine.

It belongs to the glycosyltransferase 28 family. MurG subfamily.

It localises to the cell inner membrane. It catalyses the reaction di-trans,octa-cis-undecaprenyl diphospho-N-acetyl-alpha-D-muramoyl-L-alanyl-D-glutamyl-meso-2,6-diaminopimeloyl-D-alanyl-D-alanine + UDP-N-acetyl-alpha-D-glucosamine = di-trans,octa-cis-undecaprenyl diphospho-[N-acetyl-alpha-D-glucosaminyl-(1-&gt;4)]-N-acetyl-alpha-D-muramoyl-L-alanyl-D-glutamyl-meso-2,6-diaminopimeloyl-D-alanyl-D-alanine + UDP + H(+). Its pathway is cell wall biogenesis; peptidoglycan biosynthesis. Functionally, cell wall formation. Catalyzes the transfer of a GlcNAc subunit on undecaprenyl-pyrophosphoryl-MurNAc-pentapeptide (lipid intermediate I) to form undecaprenyl-pyrophosphoryl-MurNAc-(pentapeptide)GlcNAc (lipid intermediate II). This chain is UDP-N-acetylglucosamine--N-acetylmuramyl-(pentapeptide) pyrophosphoryl-undecaprenol N-acetylglucosamine transferase, found in Methylorubrum extorquens (strain PA1) (Methylobacterium extorquens).